The primary structure comprises 104 residues: Phosphoribosyl-ATP pyrophosphatase (104 aa).

It belongs to the PRA-PH family.

The protein localises to the cytoplasm. It carries out the reaction 1-(5-phospho-beta-D-ribosyl)-ATP + H2O = 1-(5-phospho-beta-D-ribosyl)-5'-AMP + diphosphate + H(+). It functions in the pathway amino-acid biosynthesis; L-histidine biosynthesis; L-histidine from 5-phospho-alpha-D-ribose 1-diphosphate: step 2/9. The protein is Phosphoribosyl-ATP pyrophosphatase of Streptococcus gordonii (strain Challis / ATCC 35105 / BCRC 15272 / CH1 / DL1 / V288).